A 137-amino-acid chain; its full sequence is Glutamate mutase sigma subunit (137 aa).

Residues 3 to 137 form the B12-binding domain; the sequence is KKTIVLGVIG…ADLKEDLNIK (135 aa). Residues 13–17, His16, 61–63, and 93–97 contribute to the adenosylcob(III)alamin site; these read SDCHA, SSL, and NIVVG.

It belongs to the methylaspartate mutase GlmS subunit family. Heterotetramer composed of 2 epsilon subunits (GlmE) and 2 sigma subunits (GlmS). GlmE exists as a homodimer and GlmS as a monomer. Requires adenosylcob(III)alamin as cofactor.

It carries out the reaction (2S,3S)-3-methyl-L-aspartate = L-glutamate. Its pathway is amino-acid degradation; L-glutamate degradation via mesaconate pathway; acetate and pyruvate from L-glutamate: step 1/4. Its function is as follows. Catalyzes the carbon skeleton rearrangement of L-glutamate to L-threo-3-methylaspartate ((2S,3S)-3-methylaspartate). The chain is Glutamate mutase sigma subunit from Clostridium tetani (strain Massachusetts / E88).